The following is a 407-amino-acid chain: Arginine deiminase (407 aa).

Cys-397 acts as the Amidino-cysteine intermediate in catalysis.

Belongs to the arginine deiminase family.

The protein localises to the cytoplasm. It carries out the reaction L-arginine + H2O = L-citrulline + NH4(+). The protein operates within amino-acid degradation; L-arginine degradation via ADI pathway; carbamoyl phosphate from L-arginine: step 1/2. The protein is Arginine deiminase of Salmonella arizonae (strain ATCC BAA-731 / CDC346-86 / RSK2980).